Here is a 476-residue protein sequence, read N- to C-terminus: Protein transport protein Sec61 subunit alpha isoform A (476 aa).

Residues 2-33 lie on the Cytoplasmic side of the membrane; sequence GIKFLEVIKPFCAVLPEIQKPERKIQFREKVL. The chain crosses the membrane as a helical span at residues 34-53; the sequence is WTAITLFIFLVCCQIPLFGI. Residues 54–76 lie on the Lumenal side of the membrane; that stretch reads MSSDSADPFYWMRVILASNRGTL. A helical membrane pass occupies residues 77 to 96; that stretch reads MELGISPIVTSGLIMQLLAG. Residues 97-117 lie on the Cytoplasmic side of the membrane; sequence AKIIEVGDTPKDRALFNGAQK. Residues 118-138 traverse the membrane as a helical segment; that stretch reads LFGMIITIGQSIVYVMTGMYG. Residues 139-144 are Lumenal-facing; the sequence is DPSEMG. A helical membrane pass occupies residues 145 to 165; that stretch reads AGICLLIIIQLFVAGLIVLLL. At 166–172 the chain is on the cytoplasmic side; the sequence is DELLQKG. A helical membrane pass occupies residues 173-193; sequence YGLGSGISLFIATNICETIVW. Topologically, residues 194-240 are lumenal; the sequence is KAFSPTTVNTGRGTEFEGAIIALFHLLATRTDKVRALREAFYRQNLP. Residues 241–261 traverse the membrane as a helical segment; it reads NLLNLIATVFVFAVVIYFQGF. At 262–288 the chain is on the cytoplasmic side; that stretch reads RVDLPIKSARYRGQYNTYPIKLFYTSN. Residues 289 to 309 form a helical membrane-spanning segment; it reads IPIILQSALVSNLYVISQMLS. Over 310–354 the chain is Lumenal; it reads TRFSGNFLVNLLGTWSDTSTGGPARAYPVGGLCYFLSPPESFGSV. Residues 355 to 375 traverse the membrane as a helical segment; that stretch reads LDDPIHAAIYIVFMLGSCAFF. At 376 to 420 the chain is on the cytoplasmic side; it reads SKTWIEVSGSSAKDVAKQLKEQQMVMGGHRETSMVHELNRYIPTA. The chain crosses the membrane as a helical span at residues 421–441; that stretch reads AAFGGLCIGGLSVMADFLGAI. The Lumenal portion of the chain corresponds to 442–445; the sequence is GSGT. Residues 446-462 form a helical membrane-spanning segment; that stretch reads GILLAVTIIYQYFEIFV. Topologically, residues 463 to 476 are cytoplasmic; sequence KEQSEMGSMGALLF.

Belongs to the SecY/SEC61-alpha family. The SEC61 channel-forming translocon complex consists of channel-forming core components SEC61A1, SEC61B and SEC61G and different auxiliary components such as SEC62 and SEC63. The SEC61 channel associates with the multi-pass translocon (MPT) complex.

It localises to the endoplasmic reticulum membrane. Functionally, component of SEC61 channel-forming translocon complex that mediates transport of signal peptide-containing precursor polypeptides across the endoplasmic reticulum (ER). Forms a ribosome receptor and a gated pore in the ER membrane, both functions required for cotranslational translocation of nascent polypeptides. May cooperate with auxiliary protein SEC62, SEC63 and HSPA5/BiP to enable post-translational transport of small presecretory proteins. The SEC61 channel is also involved in ER membrane insertion of transmembrane proteins: it mediates membrane insertion of the first few transmembrane segments of proteins, while insertion of subsequent transmembrane regions of multi-pass membrane proteins is mediated by the multi-pass translocon (MPT) complex. This is Protein transport protein Sec61 subunit alpha isoform A (sec61aa) from Oncorhynchus mykiss (Rainbow trout).